The following is a 442-amino-acid chain: PTS system oligo-beta-mannoside-specific EIIC component (442 aa).

A PTS EIIC type-3 domain is found at 5–411; the sequence is ISQFLVPIAG…LIVFVIWFPF (407 aa). Helical transmembrane passes span 28-48, 67-87, 97-117, 138-157, 177-197, 205-225, 228-248, 286-306, 329-349, 365-385, and 391-411; these read AFML…LTNL, FGIA…FGIG, EAVF…PFII, GMFL…RRIV, FAAL…NVMV, MHDV…SGII, LIAV…QIII, TVGM…LIFM, PIIF…WVLA, LVPP…INGI, and IMGG…WFPF.

The protein resides in the cell membrane. Its function is as follows. The phosphoenolpyruvate-dependent sugar phosphotransferase system (sugar PTS), a major carbohydrate active transport system, catalyzes the phosphorylation of incoming sugar substrates concomitantly with their translocation across the cell membrane. The enzyme II GmuABC PTS system is involved in the transport of oligo-glucomannans such as cellobiose or mannobiose. The chain is PTS system oligo-beta-mannoside-specific EIIC component from Bacillus subtilis (strain 168).